The following is a 957-amino-acid chain: Retinoblastoma-related protein 1 (957 aa).

Residues 369–569 form a domain A region; the sequence is TPVSTAMTTA…EKGSSMYNSL (201 aa). The pocket stretch occupies residues 369 to 808; sequence TPVSTAMTTA…NEVFIPTVKP (440 aa). Positions 570–677 are spacer; that stretch reads IVARPTLSAE…PAAGGETCAE (108 aa). The domain B stretch occupies residues 678–808; the sequence is TGIGVFLSKI…NEVFIPTVKP (131 aa). Residues 814–854 are disordered; it reads GPGTSPNRNNEPKSGGDAASFPESPRLSRFPNLPDMSPKKV.

The protein belongs to the retinoblastoma protein (RB) family.

It localises to the nucleus. Regulator of biological processes that recruits a histone deacetylase to control gene transcription. May play a role in the entry into mitosis, negatively regulating the cell proliferation. Formation of stable complexes with geminiviridae replication-associated proteins may create a cellular environment which favors viral DNA replication. The chain is Retinoblastoma-related protein 1 (RBR1) from Triticum aestivum (Wheat).